The following is a 112-amino-acid chain: Large ribosomal subunit protein uL22 (112 aa).

It belongs to the universal ribosomal protein uL22 family. In terms of assembly, part of the 50S ribosomal subunit.

Its function is as follows. This protein binds specifically to 23S rRNA; its binding is stimulated by other ribosomal proteins, e.g. L4, L17, and L20. It is important during the early stages of 50S assembly. It makes multiple contacts with different domains of the 23S rRNA in the assembled 50S subunit and ribosome. Functionally, the globular domain of the protein is located near the polypeptide exit tunnel on the outside of the subunit, while an extended beta-hairpin is found that lines the wall of the exit tunnel in the center of the 70S ribosome. The sequence is that of Large ribosomal subunit protein uL22 from Caldanaerobacter subterraneus subsp. tengcongensis (strain DSM 15242 / JCM 11007 / NBRC 100824 / MB4) (Thermoanaerobacter tengcongensis).